The sequence spans 446 residues: Minor teichoic acid biosynthesis protein GgaA (446 aa).

Belongs to the glycosyltransferase 2 family.

It participates in cell wall biogenesis; poly(glucopyranosyl N-acetylgalactosamine 1-phosphate) teichoic acid biosynthesis. In terms of biological role, involved in the biosynthesis of galactosamine-containing minor teichoic acid, a non-essential cell wall polymer in B.subtilis 168. The polypeptide is Minor teichoic acid biosynthesis protein GgaA (ggaA) (Bacillus subtilis (strain 168)).